The primary structure comprises 1254 residues: Structural polyprotein (1254 aa).

Residues 1 to 33 (MFPFQPMYPMQPMPYRNPFAAPRRPWFPRTDPF) form a necessary for nucleocapsid assembly and virus assembly region. Residues 33 to 68 (FLAMQVQELTRSMANLTFKQRRDAPPEGPSAKKPKK) form a host transcription inhibition region. A Supraphysiological nuclear export signal motif is present at residues 41 to 48 (LTRSMANL). Residues 45-119 (MANLTFKQRR…KKPGKRQRMV (75 aa)) form a disordered region. Residues 64–68 (KKPKK) carry the Nuclear localization signal motif. Residues 80-92 (GKKKKNQGKKKAK) show a composition bias toward basic residues. The interval 91–127 (AKTGPPNPKAQNGNKKKTNKKPGKRQRMVMKLESDKT) is binding to the viral RNA. Residues threonine 93 and threonine 108 each carry the phosphothreonine modification. Residues 104–118 (NKKKTNKKPGKRQRM) show a composition bias toward basic residues. The interval 112-126 (PGKRQRMVMKLESDK) is ribosome-binding. At serine 124 the chain carries Phosphoserine. The 150-residue stretch at 126–275 (KTFPIMLEGK…KYTPENCEQW (150 aa)) folds into the Peptidase S3 domain. Position 127 is a phosphothreonine (threonine 127). Residues histidine 152, aspartate 174, and serine 226 each act as charge relay system in the active site. Positions 276 to 287 (SLVTTMCLLANV) are functions as an uncleaved signal peptide for the precursor of protein E3/E2. Over 276-701 (SLVTTMCLLA…HYYHRYPMST (426 aa)) the chain is Extracellular. N-linked (GlcNAc...) asparagine; by host glycans are attached at residues asparagine 286, asparagine 546, and asparagine 652. A helical transmembrane segment spans residues 702-722 (ILGLSICAAIATVSVAASTWL). Topologically, residues 723 to 757 (FCRSRVACLTPYRLTPNARIPFCLAVLCCARTARA) are cytoplasmic. S-palmitoyl cysteine; by host attachment occurs at residues cysteine 730, cysteine 750, and cysteine 751. The Extracellular segment spans residues 758 to 772 (ETTWESLDHLWNNNQ). Residues 773–793 (QMFWIQLLIPLAALIVVTRLL) form a helical membrane-spanning segment. The Cytoplasmic segment spans residues 794-795 (RC). Residues 796–816 (VCCVVPFLVMAGAAAPAYEHA) traverse the membrane as a helical segment. Residues 817–1224 (TTMPSQAGIS…SKTAWTWLTS (408 aa)) lie on the Extracellular side of the membrane. Cystine bridges form between cysteine 861-cysteine 926, cysteine 874-cysteine 906, cysteine 875-cysteine 908, and cysteine 880-cysteine 890. The segment at 896–913 (VYPFMWGGAYCFCDTENT) is E1 fusion peptide loop. Asparagine 946 is a glycosylation site (N-linked (GlcNAc...) asparagine; by host). 4 cysteine pairs are disulfide-bonded: cysteine 1071–cysteine 1083, cysteine 1113–cysteine 1188, cysteine 1118–cysteine 1192, and cysteine 1140–cysteine 1182. Residues 1225–1245 (LLGGSAVIIIIGLVLATIVAM) form a helical membrane-spanning segment. Residues 1246 to 1254 (YVLTNQKHN) are Cytoplasmic-facing.

As to quaternary structure, homodimer. Homomultimer. Interacts with host karyopherin KPNA4; this interaction allows the nuclear import of the viral capsid protein. Interacts with spike glycoprotein E2. Interacts with host IRAK1; the interaction leads to inhibition of IRAK1-dependent signaling. Part of a tetrameric complex composed of host CRM1, host importin alpha/beta dimer and the viral capsid; this complex blocks the receptor-mediated transport through the nuclear pore. Interacts with host phosphatase PPP1CA; this interaction dephosphorylates the capsid protein, which increases its ability to bind to the viral genome. The precursor of protein E3/E2 and E1 form a heterodimer shortly after synthesis. In terms of assembly, interacts with spike glycoprotein E2. The precursor of protein E3/E2 and E1 form a heterodimer shortly after synthesis. Processing of the precursor of protein E3/E2 into E2 and E3 results in a heterodimer of the spike glycoproteins E2 and E1. Spike at virion surface are constituted of three E2-E1 heterodimers. After target cell attachment and endocytosis, E1 change conformation to form homotrimers. Interacts with 6K protein. Interacts (via fusion peptide loop) with host LDLRAD3 (via domain LDL-receptor class A 1); this interaction mediates viral entry to the host cell. 2 adjacent E2-E1 heterodimers in the trimeric spike interact with host LDLRAD3. As to quaternary structure, interacts with spike glycoprotein E1. Processing of the precursor of protein E3/E2 into E2 and E3 results in a heterodimer of the spike glycoproteins E2 and E1. Spike at virion surface are constituted of a trimer of E2-E1 heterodimers. Interacts with 6K protein. Interacts with host LDLRAD3 (via domain LDL-receptor class A 1); this interaction mediates viral entry to the host cell. 2 adjacent E2-E1 heterodimers in the trimeric spike interact with host LDLRAD3. Oligomer. Interacts with spike glycoprotein E1. Interacts with spike glycoprotein E2. Post-translationally, structural polyprotein: Specific enzymatic cleavages in vivo yield mature proteins. Capsid protein is auto-cleaved during polyprotein translation, unmasking a signal peptide at the N-terminus of the precursor of E3/E2. The remaining polyprotein is then targeted to the host endoplasmic reticulum, where host signal peptidase cleaves it into pE2, 6K and E1 proteins. pE2 is further processed to mature E3 and E2 by host furin in trans-Golgi vesicle. In terms of processing, phosphorylated on serine and threonine residues. Palmitoylated via thioester bonds. These palmitoylations may induce disruption of the C-terminus transmembrane. This would result in the reorientation of E2 C-terminus from lumenal to cytoplasmic side. Post-translationally, N-glycosylated. In terms of processing, palmitoylated via thioester bonds.

It is found in the virion. Its subcellular location is the host cytoplasm. It localises to the host cell membrane. The protein localises to the host nucleus. The protein resides in the virion membrane. The catalysed reaction is Autocatalytic release of the core protein from the N-terminus of the togavirus structural polyprotein by hydrolysis of a -Trp-|-Ser- bond.. Forms an icosahedral capsid with a T=4 symmetry composed of 240 copies of the capsid protein surrounded by a lipid membrane through which penetrate 80 spikes composed of trimers of E1-E2 heterodimers. The capsid protein binds to the viral RNA genome at a site adjacent to a ribosome binding site for viral genome translation following genome release. Possesses a protease activity that results in its autocatalytic cleavage from the nascent structural protein. Following its self-cleavage, the capsid protein transiently associates with ribosomes, and within several minutes the protein binds to viral RNA and rapidly assembles into icosahedric core particles. The resulting nucleocapsid eventually associates with the cytoplasmic domain of the spike glycoprotein E2 at the cell membrane, leading to budding and formation of mature virions. In case of infection, new virions attach to target cells and after clathrin-mediated endocytosis their membrane fuses with the host endosomal membrane. This leads to the release of the nucleocapsid into the cytoplasm, followed by an uncoating event necessary for the genomic RNA to become accessible. The uncoating might be triggered by the interaction of capsid proteins with ribosomes. Binding of ribosomes would release the genomic RNA since the same region is genomic RNA-binding and ribosome-binding. Specifically inhibits interleukin-1 receptor-associated kinase 1/IRAK1-dependent signaling during viral entry, representing a means by which the alphaviruses may evade innate immune detection and activation prior to viral gene expression. Inhibits host transcription. Forms a tetrameric complex with XPO1/CRM1 and the nuclear import receptor importin. This complex blocks the central channel of host nuclear pores thereby inhibiting the receptor-mediated nuclear transport and thus the host mRNA and rRNA transcription. The inhibition of transcription is linked to a cytopathic effect on the host cell. Functionally, provides the signal sequence for the translocation of the precursor of protein E3/E2 to the host endoplasmic reticulum. Furin-cleaved E3 remains associated with spike glycoprotein E1 and mediates pH protection of the latter during the transport via the secretory pathway. After virion release from the host cell, the assembly protein E3 is gradually released in the extracellular space. Its function is as follows. Plays a role in viral attachment to target host cell, by binding to the cell receptor LDLRAD3. Synthesized as a p62 precursor which is processed by furin at the cell membrane just before virion budding, giving rise to E2-E1 heterodimer. The p62-E1 heterodimer is stable, whereas E2-E1 is unstable and dissociate at low pH. p62 is processed at the last step, presumably to avoid E1 fusion activation before its final export to cell surface. E2 C-terminus contains a transitory transmembrane that would be disrupted by palmitoylation, resulting in reorientation of the C-terminal tail from lumenal to cytoplasmic side. This step is critical since E2 C-terminus is involved in budding by interacting with capsid proteins. This release of E2 C-terminus in cytoplasm occurs lately in protein export, and precludes premature assembly of particles at the endoplasmic reticulum membrane. In terms of biological role, acts as a viroporin that participates in virus glycoprotein processing and transport to the plasma membrane, cell permeabilization and budding of viral particles. Disrupts the calcium homeostasis of the cell, probably at the endoplasmic reticulum level. This leads to cytoplasmic calcium elevation. Because of its lipophilic properties, the 6K protein is postulated to influence the selection of lipids that interact with the transmembrane domains of the glycoproteins, which, in turn, affects the deformability of the bilayer required for the extreme curvature that occurs as budding proceeds. Present in low amount in virions, about 3% compared to viral glycoproteins. Class II viral fusion protein. Fusion activity is inactive as long as E1 is bound to E2 in mature virion. After virus attachment to cell receptor LDLRAD3 and endocytosis, acidification of the endosome induce dissociation of E1/E2 heterodimer and concomitant trimerization of the E1 subunits. This E1 trimer is fusion active, and promotes release of viral nucleocapsid in cytoplasm after endosome and viral membrane fusion. Efficient fusion requires the presence of cholesterol and sphingolipid in the target membrane. The polypeptide is Structural polyprotein (Bos taurus (Bovine)).